Reading from the N-terminus, the 198-residue chain is Ribose 1,5-bisphosphate phosphokinase PhnN (198 aa).

25–32 (GPSGAGKD) contacts ATP.

Belongs to the ribose 1,5-bisphosphokinase family.

It carries out the reaction alpha-D-ribose 1,5-bisphosphate + ATP = 5-phospho-alpha-D-ribose 1-diphosphate + ADP. Its pathway is metabolic intermediate biosynthesis; 5-phospho-alpha-D-ribose 1-diphosphate biosynthesis; 5-phospho-alpha-D-ribose 1-diphosphate from D-ribose 5-phosphate (route II): step 3/3. Its function is as follows. Catalyzes the phosphorylation of ribose 1,5-bisphosphate to 5-phospho-D-ribosyl alpha-1-diphosphate (PRPP). This chain is Ribose 1,5-bisphosphate phosphokinase PhnN, found in Bradyrhizobium diazoefficiens (strain JCM 10833 / BCRC 13528 / IAM 13628 / NBRC 14792 / USDA 110).